We begin with the raw amino-acid sequence, 313 residues long: Calcyphosin-2 (313 aa).

3 consecutive EF-hand domains span residues 144-179, 180-215, and 216-251; these read RILTGLGKYFQQLDKEGNGLLDKADFKQALKVFHLE, VSEKDFESAWLILDDNGNGKVDYGEFKRGIIGEMNE, and YRKSYVRKAFMKLDFNKTGSVPITNIRKCYCAKKHS. Residues Asp193, Asn195, Asn197, Lys199, and Glu204 each coordinate Ca(2+).

The chain is Calcyphosin-2 (CAPS2) from Macaca fascicularis (Crab-eating macaque).